The chain runs to 60 residues: Cytotoxin 8 (60 aa).

Intrachain disulfides connect C3–C21, C14–C38, C42–C53, and C54–C59.

The protein belongs to the three-finger toxin family. Short-chain subfamily. Type IA cytotoxin sub-subfamily. As to quaternary structure, monomer in solution; Homodimer and oligomer in the presence of negatively charged lipids forming a pore with a size ranging between 20 and 30 Angstroms. In terms of tissue distribution, expressed by the venom gland.

The protein resides in the secreted. The protein localises to the target cell membrane. In terms of biological role, shows cytolytic activity on many different cells by forming pore in lipid membranes. In vivo, increases heart rate or kills the animal by cardiac arrest. In addition, it binds to heparin with high affinity, interacts with Kv channel-interacting protein 1 (KCNIP1) in a calcium-independent manner, and binds to integrin alpha-V/beta-3 (ITGAV/ITGB3) with moderate affinity. This is Cytotoxin 8 from Naja annulifera (Banded Egyptian cobra).